A 134-amino-acid polypeptide reads, in one-letter code: Small ribosomal subunit protein uS8c (134 aa).

Belongs to the universal ribosomal protein uS8 family. In terms of assembly, part of the 30S ribosomal subunit.

The protein resides in the plastid. It localises to the chloroplast. One of the primary rRNA binding proteins, it binds directly to 16S rRNA central domain where it helps coordinate assembly of the platform of the 30S subunit. This Eucalyptus globulus subsp. globulus (Tasmanian blue gum) protein is Small ribosomal subunit protein uS8c (rps8).